Reading from the N-terminus, the 348-residue chain is Papaya proteinase 4 (348 aa).

An N-terminal signal peptide occupies residues 1–18; the sequence is MAIICSFSKLLFVAICLF. Residues 19-132 constitute a propeptide, activation peptide; that stretch reads GHMSLSYCDF…EEFVNEDIVD (114 aa). 3 disulfide bridges follow: C154-C195, C188-C227, and C285-C336. Residue C157 is part of the active site. Active-site residues include H291 and N311.

It belongs to the peptidase C1 family.

It catalyses the reaction Preferential cleavage: Gly-|-Xaa, in proteins and in small molecule substrates.. With respect to regulation, not inhibited by cystatin. Its function is as follows. Thiol protease with a substrate specificity very different from the other thiol proteases. This Carica papaya (Papaya) protein is Papaya proteinase 4.